Consider the following 63-residue polypeptide: Small ribosomal subunit protein eS31 (63 aa).

4 residues coordinate Zn(2+): cysteine 31, cysteine 34, cysteine 50, and cysteine 53. The C4-type zinc finger occupies 31–53 (CPRCGSIMAHHMKPVERWACGKC).

Belongs to the eukaryotic ribosomal protein eS31 family. As to quaternary structure, part of the 30S ribosomal subunit. Zn(2+) serves as cofactor.

The polypeptide is Small ribosomal subunit protein eS31 (Sulfurisphaera tokodaii (strain DSM 16993 / JCM 10545 / NBRC 100140 / 7) (Sulfolobus tokodaii)).